Reading from the N-terminus, the 367-residue chain is Glutamate 5-kinase (367 aa).

Residue Lys-10 participates in ATP binding. The substrate site is built by Ser-50, Asp-137, and Asn-149. ATP is bound by residues 169–170 (TD) and 211–217 (TGGMGTK). Positions 275–353 (AGEITVDEGA…QQIDAILGYE (79 aa)) constitute a PUA domain.

It belongs to the glutamate 5-kinase family.

The protein resides in the cytoplasm. It catalyses the reaction L-glutamate + ATP = L-glutamyl 5-phosphate + ADP. It participates in amino-acid biosynthesis; L-proline biosynthesis; L-glutamate 5-semialdehyde from L-glutamate: step 1/2. Catalyzes the transfer of a phosphate group to glutamate to form L-glutamate 5-phosphate. The polypeptide is Glutamate 5-kinase (Cronobacter sakazakii (strain ATCC BAA-894) (Enterobacter sakazakii)).